The chain runs to 583 residues: MTTARRRPKRRGTDARTALRNVPILADIDDEQLERLATTVERRHVPANQWLFHAGEPADSIYIVDSGRFVAVAPEGHVFAEMASGDSIGDLGVIAGAARSAGVRALRDGVVWRIAAETFTDMLEATPLLQSAMLRAMARMLRQSRPAKTARRPRVIGVVSNGDTAAAPMVDAIATSLDSHGRTAVIAPPVETTSAVQEYDELVEAFSETLDRAERSNDWVLVVADRGAGDLWRHYVSAQSDRLVVLVDQRYPPDAVDSLATQRPVHLITCLAEPDPSWWDRLAPVSHHPANSDGFGALARRIAGRSLGLVMAGGGARGLAHFGVYQELTEAGVVIDRFGGTSSGAIASAAFALGMDAGDAIAAAREFIAGSDPLGDYTIPISALTRGGRVDRLVQGFFGNTLIEHLPRGFFSVSADMITGDQIIHRRGSVSGAVRASISIPGLIPPVHNGEQLLVDGGLLNNLPANVMCADTDGEVICVDLRRTFVPSKGFGLLPPIVTPPGLLRRLLTGTDNALPPLQETLLRAFDLAASTANLRELPRVAAIIEPDVSKIGVLNFKQIDAALEAGRMAARAALQAQPDLVR.

24 to 140 serves as a coordination point for a nucleoside 3',5'-cyclic phosphate; sequence ILADIDDEQL…SAMLRAMARM (117 aa). One can recognise a PNPLA domain in the interval 309-469; it reads LVMAGGGARG…LNNLPANVMC (161 aa). The GXGXXG signature appears at 313-318; it reads GGGARG. The GXSXG motif lies at 340–344; that stretch reads GTSSG. Ser-342 serves as the catalytic Nucleophile. Asp-456 (proton acceptor) is an active-site residue. The DGA/G signature appears at 456–458; it reads DGG.

This sequence belongs to the NTE family.

This is an uncharacterized protein from Mycobacterium bovis (strain ATCC BAA-935 / AF2122/97).